The primary structure comprises 508 residues: UTP--glucose-1-phosphate uridylyltransferase (508 aa).

A Blocked amino end (Ser) modification is found at Ser-2. Ser-13 is subject to Phosphoserine. Residues 113-116 (LNGG), Lys-127, Gln-190, and Gly-222 contribute to the UTP site. 115–116 (GG) is a binding site for substrate. Lys-127 is a binding site for Mg(2+). Substrate-binding positions include His-223 and 251-253 (NID). UTP-binding residues include Asp-253 and Lys-396. Position 253 (Asp-253) interacts with Mg(2+). Lys-396 is an active-site residue. The residue at position 426 (Thr-426) is a Phosphothreonine. Phosphoserine is present on Ser-434. Lys-438 bears the N6-acetyllysine mark. Ser-448 and Ser-461 each carry phosphoserine. Positions 457–508 (HLTVSGDVTFGKNVSLKGTVIIIANHGDRIDIPPGAVLENKIVSGNLRILDH) are oligomerization. Residues 502 to 503 (NL) are critical for end-to-end subunit interaction.

Belongs to the UDPGP type 1 family. As to quaternary structure, homooctamer.

It localises to the cytoplasm. The catalysed reaction is alpha-D-glucose 1-phosphate + UTP + H(+) = UDP-alpha-D-glucose + diphosphate. It participates in glycan biosynthesis; glycogen biosynthesis. UTP--glucose-1-phosphate uridylyltransferase catalyzing the conversion of glucose-1-phosphate into UDP-glucose, a crucial precursor for the production of glycogen. The protein is UTP--glucose-1-phosphate uridylyltransferase (UGP2) of Bos taurus (Bovine).